Consider the following 457-residue polypeptide: Glycine receptor subunit alpha-1 (457 aa).

The signal sequence occupies residues 1–28 (MYSFNTLRLYLWETIVFFSLAASKEAEA). Residues 29–250 (ARSAPKPMSP…RFHLERQMGY (222 aa)) lie on the Extracellular side of the membrane. Asn66 is a glycosylation site (N-linked (GlcNAc...) asparagine). Positions 93 and 157 each coordinate glycine. Cys166 and Cys180 are joined by a disulfide. The Zn(2+) site is built by Glu220 and Asp222. Cys226 and Cys237 are joined by a disulfide. Position 230-235 (230-235 (YNTGKF)) interacts with strychnine. Thr232 provides a ligand contact to glycine. Zn(2+) is bound at residue His243. The chain crosses the membrane as a helical span at residues 251–272 (YLIQMYIPSLLIVILSWISFWI). Residues 273-277 (NMDAA) lie on the Cytoplasmic side of the membrane. The chain crosses the membrane as a helical span at residues 278 to 298 (PARVGLGITTVLTMTTQSSGS). Residues 299–309 (RASLPKVSYVK) lie on the Extracellular side of the membrane. The helical transmembrane segment at 310–330 (AIDIWMAVCLLFVFSALLEYA) threads the bilayer. Topologically, residues 331–425 (AVNFVSRQHK…FIQRAKKIDK (95 aa)) are cytoplasmic. Positions 391–410 (KGANNSNTTNPPPAPSKSPE) are disordered. The chain crosses the membrane as a helical span at residues 426-446 (ISRIGFPMAFLIFNMFYWIIY). Over 447–457 (KIVRREDVHNQ) the chain is Extracellular.

This sequence belongs to the ligand-gated ion channel (TC 1.A.9) family. Glycine receptor (TC 1.A.9.3) subfamily. GLRA1 sub-subfamily. In terms of assembly, interacts with GLRB to form heteropentameric channels; this is probably the predominant form in vivo. Heteropentamer composed of four GLRA1 subunits and one GLRB subunit. Heteropentamer composed of two GLRA1 and three GLRB. Heteropentamer composed of three GLRA1 and two GLRB. Homopentamer (in vitro). Both homopentamers and heteropentamers form functional ion channels, but their characteristics are subtly different.

Its subcellular location is the postsynaptic cell membrane. It is found in the synapse. The protein localises to the perikaryon. The protein resides in the cell projection. It localises to the dendrite. Its subcellular location is the cell membrane. It catalyses the reaction chloride(in) = chloride(out). Its activity is regulated as follows. Channel opening is triggered by extracellular glycine. Channel characteristics depend on the subunit composition; heteropentameric channels are activated by lower glycine levels and display faster desensitization. Channel opening is also triggered by taurine and beta-alanine. Channel activity is potentiated by nanomolar concentrations of Zn(2+); half-maximal activation is observed with 37 nM Zn(2+). Inhibited by higher Zn(2+) levels; haf-maximal inhibition occurs at 20 uM Zn(2+). Inhibited by strychnine. Strychnine binding locks the channel in a closed conformation and prevents channel opening in response to extracellular glycine. Inhibited by lindane. Inhibited by picrotoxin. In terms of biological role, subunit of heteromeric glycine-gated chloride channels. Plays an important role in the down-regulation of neuronal excitability. Contributes to the generation of inhibitory postsynaptic currents. Channel activity is potentiated by ethanol. Potentiation of channel activity by intoxicating levels of ethanol contribute to the sedative effects of ethanol. This is Glycine receptor subunit alpha-1 (GLRA1) from Homo sapiens (Human).